The sequence spans 220 residues: MTQETLRKLWITLAILTLVVMINIHGSTQKSDFALIIKLPIELKFDGELTREAYAVHGMRFFALFFWLVPFLAVYHAKRSSGSASEAFPFRLLDIEPRSRPGKWVQGIAFVVLICLPLLTAIHLWRIVVGMQVCQHVSNALVNCADIWSRPVNAGPWDDTYRLANWGPTYDPLVEPVLAVILTAVSVYLTLRLVIEMRRAGSRPVATGNTPAEPITTSVT.

A run of 4 helical transmembrane segments spans residues 9 to 29 (LWITLAILTLVVMINIHGSTQ), 54 to 74 (YAVHGMRFFALFFWLVPFLAV), 105 to 125 (VQGIAFVVLICLPLLTAIHLW), and 177 to 197 (VLAVILTAVSVYLTLRLVIEM).

Its subcellular location is the cell membrane. This is an uncharacterized protein from Sinorhizobium fredii (strain NBRC 101917 / NGR234).